The sequence spans 249 residues: tRNA (guanine-N(1)-)-methyltransferase (249 aa).

Residues glycine 113 and 133 to 138 (IGDFVV) each bind S-adenosyl-L-methionine.

The protein belongs to the RNA methyltransferase TrmD family. As to quaternary structure, homodimer.

Its subcellular location is the cytoplasm. It catalyses the reaction guanosine(37) in tRNA + S-adenosyl-L-methionine = N(1)-methylguanosine(37) in tRNA + S-adenosyl-L-homocysteine + H(+). Its function is as follows. Specifically methylates guanosine-37 in various tRNAs. This chain is tRNA (guanine-N(1)-)-methyltransferase, found in Neisseria meningitidis serogroup C / serotype 2a (strain ATCC 700532 / DSM 15464 / FAM18).